A 114-amino-acid chain; its full sequence is UPF0342 protein LSEI_1724 (114 aa).

Belongs to the UPF0342 family.

In Lacticaseibacillus paracasei (strain ATCC 334 / BCRC 17002 / CCUG 31169 / CIP 107868 / KCTC 3260 / NRRL B-441) (Lactobacillus paracasei), this protein is UPF0342 protein LSEI_1724.